Here is a 307-residue protein sequence, read N- to C-terminus: Tyrosine recombinase XerC (307 aa).

A Core-binding (CB) domain is found at 6-89 (HNTLQTVNTF…TLRTFFRYLM (84 aa)). The region spanning 110-293 (RLPKALDVDQ…DFQHLAQVYD (184 aa)) is the Tyr recombinase domain. Active-site residues include Arg-151, Lys-175, His-245, Arg-248, and His-271. Catalysis depends on Tyr-280, which acts as the O-(3'-phospho-DNA)-tyrosine intermediate.

Belongs to the 'phage' integrase family. XerC subfamily. In terms of assembly, forms a cyclic heterotetrameric complex composed of two molecules of XerC and two molecules of XerD.

The protein localises to the cytoplasm. In terms of biological role, site-specific tyrosine recombinase, which acts by catalyzing the cutting and rejoining of the recombining DNA molecules. The XerC-XerD complex is essential to convert dimers of the bacterial chromosome into monomers to permit their segregation at cell division. It also contributes to the segregational stability of plasmids. The sequence is that of Tyrosine recombinase XerC from Alcanivorax borkumensis (strain ATCC 700651 / DSM 11573 / NCIMB 13689 / SK2).